Here is a 419-residue protein sequence, read N- to C-terminus: Zinc finger protein Pegasus (419 aa).

Residue K5 forms a Glycyl lysine isopeptide (Lys-Gly) (interchain with G-Cter in SUMO2) linkage. The interval 36–55 is disordered; the sequence is DKEAETLQGAGTDGDQNGLD. C2H2-type zinc fingers lie at residues 82–104, 110–132, and 138–161; these read LKCR…IRIH, HRCH…MRSH, and YKCE…RRKH. K185 is covalently cross-linked (Glycyl lysine isopeptide (Lys-Gly) (interchain with G-Cter in SUMO2)). A compositionally biased stretch (polar residues) spans 262–273; the sequence is LSSLPPENQNPA. Disordered stretches follow at residues 262 to 284 and 297 to 356; these read LSSL…PDEK and VSAV…PTLP. Low complexity predominate over residues 297–311; sequence VSAVSASIPQSSSPT. Over residues 332 to 349 the composition is skewed to polar residues; the sequence is SEPSAHTSTPSIGNSQPS. 2 consecutive C2H2-type zinc fingers follow at residues 364–386 and 392–416; these read HHCQ…MGCH and FQCN…RGQH.

Belongs to the Ikaros C2H2-type zinc-finger protein family. Self-associates. Interacts with other family members; IKZF1, IKZF2, IKZF3 and IKZF4.

The protein resides in the nucleus. Functionally, transcriptional repressor that binds the core 5'GNNTGTNG-3' DNA consensus sequence. Involved in megakaryocyte differentiation. In Mus musculus (Mouse), this protein is Zinc finger protein Pegasus (Ikzf5).